The chain runs to 810 residues: Volume-regulated anion channel subunit LRRC8A (810 aa).

Residue Met-1 is modified to N-acetylmethionine. Residues 1–23 lie on the Cytoplasmic side of the membrane; sequence MIPVTELRYFADTQPAYRILKPW. The helical transmembrane segment at 24–47 threads the bilayer; it reads WDVFTDYISIVMLMIAVFGGTLQV. Topologically, residues 48-123 are extracellular; that stretch reads TQDKMICLPC…YENRLHWFAK (76 aa). Intrachain disulfides connect Cys-54/Cys-310, Cys-57/Cys-65, and Cys-113/Cys-295. Asn-66 and Asn-83 each carry an N-linked (GlcNAc...) asparagine glycan. Residues 124 to 142 traverse the membrane as a helical segment; that stretch reads YFPYLVLLHTLIFLACSNF. At 143–264 the chain is on the cytoplasmic side; it reads WFKFPRTSSK…EEGDIVYRLY (122 aa). Phosphothreonine is present on Thr-200. A Phosphoserine modification is found at Ser-202. At Thr-215 the chain carries Phosphothreonine. A Phosphoserine modification is found at Ser-217. A helical membrane pass occupies residues 265-286; that stretch reads MRQTIIKVIKFILIICYTVYYV. The Extracellular portion of the chain corresponds to 287–316; the sequence is HNIKFDVDCTVDIESLTGYRTYRCAHPLAT. A helical membrane pass occupies residues 317-341; it reads LFKILASFYISLVIFYGLICMYTLW. Residues 342 to 810 lie on the Cytoplasmic side of the membrane; the sequence is WMLRRSLKKY…RLWRADKEQA (469 aa). LRR repeat units follow at residues 399 to 422, 423 to 445, 447 to 468, 469 to 492, 493 to 515, 518 to 542, 543 to 565, 567 to 589, 590 to 613, 615 to 637, 639 to 661, 662 to 684, 686 to 707, 708 to 730, 732 to 753, 754 to 776, and 778 to 801; these read ENKLRQLNLNNEWTLDKLRQRLTK, NAQDKLELHLFMLSGIPDTVFDL, ELEVLKLELIPDVTIPPSIAQL, TGLKELWLYHTAAKIEAPALAFLR, ENLRALHIKFTDIKEIPLWIYSL, LEELHLTGNLSAENNRYIVIDGLRE, LKRLKVLRLKSNLSKLPQVVTDV, VHLQKLSINNEGTKLIVLNSLKK, MANLTELELIRCDLERIPHSIFSL, NLQEIDLKDNNLKTIEEIISFQH, HRLTCLKLWYNHIAYIPIQIGNL, TNLERLYLNRNKIEKIPTQLFYC, KLRYLDLSHNNLTFLPADIGLL, QNLQNLAITANRIETLPPELFQC, KLRALHLGNNVLQSLPSRVGEL, TNLTQIELRGNRLECLPVELGEC, and LLKRSGLVVEEDLFNTLPPEVKER. The Di-leucine motif signature appears at 706–707; the sequence is LL.

This sequence belongs to the LRRC8 family. Heterohexamer; oligomerizes with other LRRC8 proteins (LRRC8B, LRRC8C, LRRC8D and/or LRRC8E) to form a heterohexamer. Can form homohexamers in vitro, but these have lower conductance than heterohexamers. In vivo, the subunit composition may depend primarily on expression levels, and heterooligomeric channels containing various proportions of the different LRRC8 proteins may coexist. Interact with GRB2. Interacts with NOX4; this interaction prevents the ubiquitin-mediated degradation of LRRC8A. N-glycosylated. In terms of tissue distribution, expressed in brain, kidney, ovary, lung, liver, heart, and fetal brain and liver. Found at high levels in bone marrow; lower levels are detected in peripheral blood cells. Expressed on T-cells as well as on B-lineage cells.

The protein localises to the cell membrane. It is found in the lysosome membrane. It carries out the reaction chloride(in) = chloride(out). It catalyses the reaction iodide(out) = iodide(in). The catalysed reaction is taurine(out) = taurine(in). The enzyme catalyses L-aspartate(out) = L-aspartate(in). It carries out the reaction L-glutamate(out) = L-glutamate(in). It catalyses the reaction myo-inositol(out) = myo-inositol(in). The catalysed reaction is 2',3'-cGAMP(out) = 2',3'-cGAMP(in). Inhibited by (4-[(2-butyl-6,7-dichloro-2-cyclopentyl-2,3-dihydro-1-oxo-1H-inden-5-yl)oxy]butanoic acid), which plugs the channel like a cork in a bottle by binding in the extracellular selectivity filter and sterically occluding ion conduction. Lipids may block conduction in closed heterohexameric channels. In terms of biological role, essential component of the volume-regulated anion channel (VRAC, also named VSOAC channel), an anion channel required to maintain a constant cell volume in response to extracellular or intracellular osmotic changes. The VRAC channel conducts iodide better than chloride and can also conduct organic osmolytes like taurine. Mediates efflux of amino acids, such as aspartate and glutamate, in response to osmotic stress. LRRC8A and LRRC8D are required for the uptake of the drug cisplatin. In complex with LRRC8C or LRRC8E, acts as a transporter of immunoreactive cyclic dinucleotide GMP-AMP (2'-3'-cGAMP), an immune messenger produced in response to DNA virus in the cytosol: mediates both import and export of 2'-3'-cGAMP, thereby promoting transfer of 2'-3'-cGAMP to bystander cells. In contrast, complexes containing LRRC8D inhibit transport of 2'-3'-cGAMP. Required for in vivo channel activity, together with at least one other family member (LRRC8B, LRRC8C, LRRC8D or LRRC8E); channel characteristics depend on the precise subunit composition. Can form functional channels by itself (in vitro). Involved in B-cell development: required for the pro-B cell to pre-B cell transition. Also required for T-cell development. Required for myoblast differentiation: VRAC activity promotes membrane hyperpolarization and regulates insulin-stimulated glucose metabolism and oxygen consumption. Also acts as a regulator of glucose-sensing in pancreatic beta cells: VRAC currents, generated in response to hypotonicity- or glucose-induced beta cell swelling, depolarize cells, thereby causing electrical excitation, leading to increase glucose sensitivity and insulin secretion. Also plays a role in lysosome homeostasis by forming functional lysosomal VRAC channels in response to low cytoplasmic ionic strength condition: lysosomal VRAC channels are necessary for the formation of large lysosome-derived vacuoles, which store and then expel excess water to maintain cytosolic water homeostasis. Acts as a key factor in NLRP3 inflammasome activation by modulating itaconate efflux and mitochondria function. The polypeptide is Volume-regulated anion channel subunit LRRC8A (Homo sapiens (Human)).